The chain runs to 293 residues: Magnetosome protein MamB (293 aa).

Residues 1-12 (MTTAACRKCRDE) are Cytoplasmic-facing. The segment at 1 to 214 (MTTAACRKCR…GLMDTSVEND (214 aa)) is transmembrane domain (TMD). Residues 13–33 (VIWWAFFINIGQTTYKGVLGV) form a helical membrane-spanning segment. The Lumenal segment spans residues 34 to 78 (LSGSAALVADAMHSGADVVATLVTMFSVKVSDKKADEKYPFGYGN). The helical transmembrane segment at 79-99 (IQFIASSIVGLILFFGALYLM) threads the bilayer. The Cytoplasmic segment spans residues 100–105 (YESTMQ). Residues 106 to 126 (IIAGNTSSPSPFAVLGAIVSI) traverse the membrane as a helical segment. The Lumenal portion of the chain corresponds to 127–158 (ATNELMFRYQSCVGRQNNSPAIIANAWDNRSD). Residues 159 to 179 (ALSSVAVLIGIVAAVVGFPIA) traverse the membrane as a helical segment. Residues 180–293 (DRLAAIGVGI…VGVTPVRIAA (114 aa)) are Cytoplasmic-facing. The tract at residues 215–293 (VLVDAYNIAK…VGVTPVRIAA (79 aa)) is C-terminal domain (CTD). Residues His245, Asp247, and His283 each contribute to the Zn(2+) site.

It belongs to the cation diffusion facilitator (CDF) transporter (TC 2.A.4) family. In terms of assembly, the isolated C-terminal domain (approximately 213-293) forms homodimers. Forms heterodimers with MamM.

Its subcellular location is the magnetosome membrane. Plays a dual, essential role in magnetosome formation; required for magnetosome vesicle formation as well as biomineralization. Probably binds and transports iron. Requires heterodimerization with MamM for stability. The chain is Magnetosome protein MamB (mamB) from Magnetospira sp. (strain QH-2) (Marine magnetic spirillum (strain QH-2)).